We begin with the raw amino-acid sequence, 256 residues long: Thiazole synthase (256 aa).

Lys-95 (schiff-base intermediate with DXP) is an active-site residue. Residues Gly-156, 182–183, and 204–205 each bind 1-deoxy-D-xylulose 5-phosphate; these read AG and NT.

The protein belongs to the ThiG family. As to quaternary structure, homotetramer. Forms heterodimers with either ThiH or ThiS.

It is found in the cytoplasm. The catalysed reaction is [ThiS sulfur-carrier protein]-C-terminal-Gly-aminoethanethioate + 2-iminoacetate + 1-deoxy-D-xylulose 5-phosphate = [ThiS sulfur-carrier protein]-C-terminal Gly-Gly + 2-[(2R,5Z)-2-carboxy-4-methylthiazol-5(2H)-ylidene]ethyl phosphate + 2 H2O + H(+). It functions in the pathway cofactor biosynthesis; thiamine diphosphate biosynthesis. In terms of biological role, catalyzes the rearrangement of 1-deoxy-D-xylulose 5-phosphate (DXP) to produce the thiazole phosphate moiety of thiamine. Sulfur is provided by the thiocarboxylate moiety of the carrier protein ThiS. In vitro, sulfur can be provided by H(2)S. This is Thiazole synthase from Enterobacter sp. (strain 638).